The primary structure comprises 183 residues: Inner membrane-spanning protein YciB (183 aa).

5 helical membrane-spanning segments follow: residues 19–39 (LYGV…QLIV), 53–73 (IMGI…DLNF), 76–96 (WKVT…QFVF), 121–141 (LGWA…SYYF), and 151–171 (TFGF…YLYP).

The protein belongs to the YciB family.

Its subcellular location is the cell inner membrane. In terms of biological role, plays a role in cell envelope biogenesis, maintenance of cell envelope integrity and membrane homeostasis. The sequence is that of Inner membrane-spanning protein YciB from Actinobacillus pleuropneumoniae serotype 5b (strain L20).